We begin with the raw amino-acid sequence, 873 residues long: uncharacterized protein (873 aa).

Disordered regions lie at residues 1–24, 175–251, 375–423, 506–540, 568–592, 662–773, and 822–855; these read MSNKPDANDQCMVKETISRMSMSK, SSAV…TSIS, PSRH…AKKP, DSESASYNTDDANSVVSPSKDGISTTTVSSDATRS, DQSSRYPGRHFGKTGRSHFPRAPEY, ANDS…TSQI, and ANPYSTNNDGNPSNNTSDVEVNETSMNDNSEEPI. A compositionally biased stretch (basic and acidic residues) spans 211-225; it reads KDSDRSQTKNTHEET. Over residues 376–385 the composition is skewed to basic residues; sequence SRHHSHRKKE. The span at 574–586 shows a compositional bias: basic residues; sequence PGRHFGKTGRSHF. Over residues 665–686 the composition is skewed to low complexity; that stretch reads SPNSSESLESLNNQSYSSSPYS. Residues 698 to 740 show a composition bias toward polar residues; it reads QSLNDSPQTSDFKASNLNDSSSNVHSIFQTRETTSPSVQNKTP. Basic and acidic residues predominate over residues 743–755; that stretch reads YHRELKSSKDGHE. Positions 758–773 are enriched in low complexity; sequence SPLVSSSPSGSFTSQI. Residues 823-855 show a composition bias toward polar residues; that stretch reads NPYSTNNDGNPSNNTSDVEVNETSMNDNSEEPI.

It localises to the cytoplasm. It is found in the vacuole membrane. This is an uncharacterized protein from Schizosaccharomyces pombe (strain 972 / ATCC 24843) (Fission yeast).